We begin with the raw amino-acid sequence, 530 residues long: Glucocorticoid modulatory element-binding protein 2 (530 aa).

The SAND domain maps to 81–163; that stretch reads EEGENLEAEI…RKIMDSGELD (83 aa). Zn(2+) is bound at residue Cys110. DNA is bound by residues Lys136, Lys140, Lys143, and Arg154. Lys155 participates in a covalent cross-link: Glycyl lysine isopeptide (Lys-Gly) (interchain with G-Cter in SUMO1); alternate. A Glycyl lysine isopeptide (Lys-Gly) (interchain with G-Cter in SUMO2); alternate cross-link involves residue Lys155. The Zn(2+) site is built by His167, Cys171, and Cys175. Coiled coils occupy residues 245–270 and 304–344; these read LLDE…RVQD and QMDR…SNVL. At Ser373 the chain carries Phosphoserine.

Homodimer, and heterodimer of GMEB1 and GMEB2. Interacts with the glucocorticoid receptor (NR3C1). May interact with CREB-binding protein (CBP).

The protein localises to the nucleus. It localises to the cytoplasm. In terms of biological role, trans-acting factor that binds to glucocorticoid modulatory elements (GME) present in the TAT (tyrosine aminotransferase) promoter and increases sensitivity to low concentrations of glucocorticoids. Also binds to the transferrin receptor promoter. The protein is Glucocorticoid modulatory element-binding protein 2 (Gmeb2) of Mus musculus (Mouse).